Consider the following 928-residue polypeptide: G-protein coupled receptor family C group 6 member A (928 aa).

The signal sequence occupies residues 1–20; it reads MALLITVVTCFMIILDTSQS. Residues 21–594 lie on the Extracellular side of the membrane; it reads CHTPDDFVAI…EYLDWDDSLA (574 aa). 3 N-linked (GlcNAc...) asparagine glycosylation sites follow: Asn-332, Asn-555, and Asn-567. The chain crosses the membrane as a helical span at residues 595–615; that stretch reads LLLIALSLLGIAFVLAIGIIF. Topologically, residues 616 to 630 are cytoplasmic; it reads TRNLKTPVVKSSGGL. The chain crosses the membrane as a helical span at residues 631 to 651; the sequence is VVCYVMLICHALNFASTGFFI. Over 652-669 the chain is Extracellular; the sequence is GEPQDFACKTRQTLFGVS. Residues 670 to 690 form a helical membrane-spanning segment; that stretch reads FTLCVSCILTKSLKILLAFSF. Residues 691-706 are Cytoplasmic-facing; sequence DPKLTMFLKCLYRPVP. The chain crosses the membrane as a helical span at residues 707–727; the sequence is IVLTCTGIQVVICTLWLVLAA. The Extracellular portion of the chain corresponds to 728–750; that stretch reads PSVEENISLPRVIILECEEGSAL. Residues 751 to 771 traverse the membrane as a helical segment; the sequence is AFGTMLGYITVLAFICFVFAF. Over 772 to 784 the chain is Cytoplasmic; it reads KGRKLPENYNEAK. The helical transmembrane segment at 785 to 805 threads the bilayer; that stretch reads FLTFGMLIYFIAWITFIPVYT. Residues 806–812 are Extracellular-facing; it reads TTFGKYL. A helical transmembrane segment spans residues 813–833; sequence PAVEIIVILISNYGILCCIFF. The Cytoplasmic portion of the chain corresponds to 834–928; sequence PKCYIILCKQ…TLRQKRSSSI (95 aa).

This sequence belongs to the G-protein coupled receptor 3 family. In terms of assembly, homodimer; disulfide-linked. In terms of processing, N-glycosylated. In terms of tissue distribution, expressed at high level in liver, lung, spleen and heart. Expressed at lower level in kidney, skeletal muscle and brain. Expressed in 7 dpc, 11 dpc, 15 dpc and 17 dpc embryos.

It is found in the cell membrane. In terms of biological role, receptor activated by multiple ligands, including osteocalcin (BGLAP), basic amino acids, and various cations. Activated by amino acids with a preference for basic amino acids such as L-Lys, L-Arg and L-ornithine but also by small and polar amino acids. The L-alpha amino acids respond is augmented by divalent cations Ca(2+) and Mg(2+). Seems to act through a G(q)/G(11) and G(i)-coupled pathway. Regulates testosterone production by acting as a ligand for uncarboxylated osteocalcin hormone: osteocalcin-binding at the surface of Leydig cells initiates a signaling response that promotes the expression of enzymes required for testosterone synthesis in a CREB-dependent manner. Mediates the non-genomic effects of androgens in multiple tissue. May coordinate nutritional and hormonal anabolic signals through the sensing of extracellular amino acids, osteocalcin, divalent ions and its responsiveness to anabolic steroids. The chain is G-protein coupled receptor family C group 6 member A (Gprc6a) from Mus musculus (Mouse).